Consider the following 238-residue polypeptide: Probable transcriptional regulatory protein SZO_02930 (238 aa).

The protein belongs to the TACO1 family. YeeN subfamily.

It localises to the cytoplasm. In Streptococcus equi subsp. zooepidemicus (strain H70), this protein is Probable transcriptional regulatory protein SZO_02930.